The sequence spans 502 residues: RNA-splicing ligase RtcB homolog 2 (502 aa).

Mn(2+)-binding residues include aspartate 120, cysteine 123, histidine 228, histidine 260, and histidine 354. 227-231 (NHYAE) is a binding site for GMP. GMP is bound by residues 354–355 (HN), 403–406 (GGSM), serine 410, and 429–432 (HGAG). Residue histidine 429 is the GMP-histidine intermediate of the active site.

Belongs to the RtcB family. Catalytic component of the tRNA-splicing ligase complex. The cofactor is Mn(2+).

It catalyses the reaction a 3'-end 3'-phospho-ribonucleotide-RNA + a 5'-end dephospho-ribonucleoside-RNA + GTP = a ribonucleotidyl-ribonucleotide-RNA + GMP + diphosphate. The enzyme catalyses a 3'-end 2',3'-cyclophospho-ribonucleotide-RNA + a 5'-end dephospho-ribonucleoside-RNA + GTP + H2O = a ribonucleotidyl-ribonucleotide-RNA + GMP + diphosphate + H(+). Its function is as follows. Catalytic subunit of the tRNA-splicing ligase complex that acts by directly joining spliced tRNA halves to mature-sized tRNAs by incorporating the precursor-derived splice junction phosphate into the mature tRNA as a canonical 3',5'-phosphodiester. May act as an RNA ligase with broad substrate specificity, and may function toward other RNAs. The sequence is that of RNA-splicing ligase RtcB homolog 2 from Culex quinquefasciatus (Southern house mosquito).